A 237-amino-acid polypeptide reads, in one-letter code: DNA repair protein RecO (237 aa).

Belongs to the RecO family.

Functionally, involved in DNA repair and RecF pathway recombination. This is DNA repair protein RecO from Rickettsia akari (strain Hartford).